The primary structure comprises 413 residues: tRNA (guanine-N(7)-)-methyltransferase non-catalytic subunit WDR4 (413 aa).

Residue Ala-2 is modified to N-acetylalanine. 5 WD repeats span residues Thr-61–Val-100, Met-102–Arg-141, Gly-145–Phe-185, Gly-188–Cys-228, and Thr-289–Ala-329. A disordered region spans residues Arg-380 to Cys-413. 2 positions are modified to phosphoserine: Ser-392 and Ser-412.

This sequence belongs to the WD repeat TRM82 family. Non-catalytic component of the METTL1-WDR4 complex, composed of METTL1 and WDR4. Interacts with FEN1; the interaction is direct.

The protein resides in the nucleus. It is found in the chromosome. Its pathway is tRNA modification; N(7)-methylguanine-tRNA biosynthesis. Functionally, non-catalytic component of the METTL1-WDR4 methyltransferase complex required for the formation of N(7)-methylguanine in a subset of RNA species, such as tRNAs, mRNAs and microRNAs (miRNAs). In the METTL1-WDR4 methyltransferase complex, WDR4 acts as a scaffold for tRNA-binding. Required for the formation of N(7)-methylguanine at position 46 (m7G46) in a large subset of tRNAs that contain the 5'-RAGGU-3' motif within the variable loop. M7G46 interacts with C13-G22 in the D-loop to stabilize tRNA tertiary structure and protect tRNAs from decay. Also required for the formation of N(7)-methylguanine at internal sites in a subset of mRNAs. Also required for methylation of a specific subset of miRNAs, such as let-7. Acts as a regulator of embryonic stem cell self-renewal and differentiation. Independently of METTL1, also plays a role in genome stability: localizes at the DNA replication site and regulates endonucleolytic activities of FEN1. The chain is tRNA (guanine-N(7)-)-methyltransferase non-catalytic subunit WDR4 from Mus musculus (Mouse).